Consider the following 985-residue polypeptide: MASSRAQRFNPIAFTPWPVTCITTIVYLALLIPILVINLVVPSAPETNPKGVNLTEAWRDLQHLTGGFHPYNSRRNDEVHEWLLSRINSIIRPTVEAGQRSSATDNLPEVFVFDDNRSNLTYSNGGVGKTSIVGVYFESTNIIVYIRGSEDDLENWWERSNGKPKGKGGVLVNAHYDSVSTGYGATDDGIGVVSLLQLLRYFTTPGNNPRKGLVLLFNNGEEDYLNGAHVFSQHPLSNFTHTFLNLEGAGAGGRAALFRTTDTEVTRFYGNTKHPFGSVLAADGFKMGLLRSQTDYVVFNGILGLRGLDLAFIAPRSRYHTDQDDTRHTSIDSLWHMLSASIGTTEGLVSYTGMDFDGKSKDQNKVNSGAGTLGVWFDMFGTAFAVFRLHTLFAISVALLVIAPLVIFVTNRMYLFSMSKSLEGTGDQVSLRGLRGFSRTPIILVTATTIPICLAYLLEKVNPYIVHSSQFSVWSMMFSAWIFLAWFLACAADFFRPSALHRAYSYTWIFIATWIMLVINTVYANQKGIAAGYFLLFYFAGAFLATWISYLELFALPRKGDFARQTTGRRPSSLSSRLLTSSADELRSNASPSTAEFPGAAGEDTDPTESTSLLRGQRTTFANYRTSGPGGAAEETDEREDINKGGTFEHEQSWSWTLPRWTWVLQLLLLAPIVLILVGQLALFLTASMCQVGSDGVSTFVVYLACAVFTTLLCIPLFPLIHRFTYHIPTFLFLVFIGTLIYNLVAFPFSPANRLKTFFIQEVDLDNGSNTVSLTGIQPYLTDAINSIPSAAGQNITCDKTTPFGKLERCSWSGLSPNVLGQGRERDTEIVPDKWITYNITKTVGKNKARIEISGRNTRACKLKFDRAVANFQVSGSAVDHRMPPTSRQGVAEIRLWSRTWENTWVVDINWHESADESDDDDDDDEKHDAPQNVLSGKAICMWSDANQPGVIPALDEVRLYAPSWIAISKAADGLVEASHSFTIQ.

Topologically, residues 1 to 20 (MASSRAQRFNPIAFTPWPVT) are cytoplasmic. A helical membrane pass occupies residues 21-41 (CITTIVYLALLIPILVINLVV). Topologically, residues 42–388 (PSAPETNPKG…MFGTAFAVFR (347 aa)) are vacuolar. Asparagine 53, asparagine 116, and asparagine 119 each carry an N-linked (GlcNAc...) asparagine glycan. Zn(2+) is bound by residues histidine 175 and aspartate 187. Residue glutamate 221 is the Proton acceptor of the active site. Glutamate 222 is a binding site for Zn(2+). A glycan (N-linked (GlcNAc...) asparagine) is linked at asparagine 238. 2 residues coordinate Zn(2+): glutamate 247 and histidine 320. A helical transmembrane segment spans residues 389–409 (LHTLFAISVALLVIAPLVIFV). The Cytoplasmic portion of the chain corresponds to 410–440 (TNRMYLFSMSKSLEGTGDQVSLRGLRGFSRT). Residues 441–461 (PIILVTATTIPICLAYLLEKV) traverse the membrane as a helical segment. Residues 462–470 (NPYIVHSSQ) lie on the Vacuolar side of the membrane. Residues 471 to 491 (FSVWSMMFSAWIFLAWFLACA) form a helical membrane-spanning segment. The Cytoplasmic segment spans residues 492–502 (ADFFRPSALHR). The helical transmembrane segment at 503-523 (AYSYTWIFIATWIMLVINTVY) threads the bilayer. The Vacuolar segment spans residues 524–527 (ANQK). A helical transmembrane segment spans residues 528 to 548 (GIAAGYFLLFYFAGAFLATWI). Over 549-666 (SYLELFALPR…TLPRWTWVLQ (118 aa)) the chain is Cytoplasmic. The segment at 563–612 (ARQTTGRRPSSLSSRLLTSSADELRSNASPSTAEFPGAAGEDTDPTESTS) is disordered. Low complexity predominate over residues 566–582 (TTGRRPSSLSSRLLTSS). Residues 667 to 687 (LLLLAPIVLILVGQLALFLTA) traverse the membrane as a helical segment. At 688–700 (SMCQVGSDGVSTF) the chain is on the vacuolar side. Residues 701–721 (VVYLACAVFTTLLCIPLFPLI) form a helical membrane-spanning segment. The Cytoplasmic portion of the chain corresponds to 722–727 (HRFTYH). A helical membrane pass occupies residues 728-748 (IPTFLFLVFIGTLIYNLVAFP). The Vacuolar portion of the chain corresponds to 749–985 (FSPANRLKTF…VEASHSFTIQ (237 aa)). 3 N-linked (GlcNAc...) asparagine glycosylation sites follow: asparagine 767, asparagine 795, and asparagine 839.

The protein belongs to the peptidase M28 family. Zn(2+) is required as a cofactor.

It localises to the vacuole membrane. In terms of biological role, may be involved in vacuolar sorting and osmoregulation. This chain is Vacuolar membrane protease, found in Ajellomyces capsulatus (strain G186AR / H82 / ATCC MYA-2454 / RMSCC 2432) (Darling's disease fungus).